A 360-amino-acid chain; its full sequence is Serine/threonine transporter SstT (360 aa).

9 helical membrane-spanning segments follow: residues 17–37 (IGIGVVLGVLLGLIAPKITVI), 40–60 (FGSLFVGALKAIAPLLVLTLV), 78–98 (VICLYLFGTFAAAFIAVGASY), 138–158 (ALATANYIGVLTWAAVFGLAF), 179–199 (VVGWIIGLAPFGIMGLVFDTI), 212–232 (LLLLLLVGSMIFVALVVNPLI), 295–315 (MAGAAITINILTMAAVHTLGI), 316–336 (SVDFSSALLLSVVASLSAAGA), and 339–359 (VAGGSLLLIPVACSLFVVPYV).

It belongs to the dicarboxylate/amino acid:cation symporter (DAACS) (TC 2.A.23) family.

Its subcellular location is the cell membrane. It catalyses the reaction L-serine(in) + Na(+)(in) = L-serine(out) + Na(+)(out). It carries out the reaction L-threonine(in) + Na(+)(in) = L-threonine(out) + Na(+)(out). In terms of biological role, involved in the import of serine and threonine into the cell, with the concomitant import of sodium (symport system). This chain is Serine/threonine transporter SstT, found in Streptococcus suis (strain 05ZYH33).